The sequence spans 246 residues: Bis(5'-nucleosyl)-tetraphosphatase PrpE [asymmetrical] (246 aa).

This sequence belongs to the PrpE family. The cofactor is Ni(2+).

It catalyses the reaction P(1),P(4)-bis(5'-guanosyl) tetraphosphate + H2O = GMP + GTP + 2 H(+). In terms of biological role, asymmetrically hydrolyzes Ap4p to yield AMP and ATP. The sequence is that of Bis(5'-nucleosyl)-tetraphosphatase PrpE [asymmetrical] from Bacillus cereus (strain ATCC 10987 / NRS 248).